Reading from the N-terminus, the 236-residue chain is 5'-methylthioadenosine/S-adenosylhomocysteine nucleosidase (236 aa).

The Proton acceptor role is filled by glutamate 12. Substrate-binding positions include glycine 78, isoleucine 153, and 174–175; that span reads ME. Aspartate 198 serves as the catalytic Proton donor.

It belongs to the PNP/UDP phosphorylase family. MtnN subfamily.

It carries out the reaction S-adenosyl-L-homocysteine + H2O = S-(5-deoxy-D-ribos-5-yl)-L-homocysteine + adenine. The enzyme catalyses S-methyl-5'-thioadenosine + H2O = 5-(methylsulfanyl)-D-ribose + adenine. The catalysed reaction is 5'-deoxyadenosine + H2O = 5-deoxy-D-ribose + adenine. The protein operates within amino-acid biosynthesis; L-methionine biosynthesis via salvage pathway; S-methyl-5-thio-alpha-D-ribose 1-phosphate from S-methyl-5'-thioadenosine (hydrolase route): step 1/2. Catalyzes the irreversible cleavage of the glycosidic bond in both 5'-methylthioadenosine (MTA) and S-adenosylhomocysteine (SAH/AdoHcy) to adenine and the corresponding thioribose, 5'-methylthioribose and S-ribosylhomocysteine, respectively. Also cleaves 5'-deoxyadenosine, a toxic by-product of radical S-adenosylmethionine (SAM) enzymes, into 5-deoxyribose and adenine. The protein is 5'-methylthioadenosine/S-adenosylhomocysteine nucleosidase of Shewanella oneidensis (strain ATCC 700550 / JCM 31522 / CIP 106686 / LMG 19005 / NCIMB 14063 / MR-1).